Here is a 461-residue protein sequence, read N- to C-terminus: Phytase A (461 aa).

Cysteines 22 and 31 form a disulfide. 1D-myo-inositol hexakisphosphate contacts are provided by Gln-41, Tyr-42, Arg-71, His-72, Arg-75, and Thr-78. Intrachain disulfides connect Cys-61-Cys-405, Cys-205-Cys-456, Cys-254-Cys-272, and Cys-427-Cys-435. His-72 functions as the Nucleophile in the catalytic mechanism. Residues Asn-95 and Asn-110 are each glycosylated (N-linked (GlcNAc...) asparagine). Position 155 (Arg-155) interacts with 1D-myo-inositol hexakisphosphate. The N-linked (GlcNAc...) asparagine glycan is linked to Asn-197. Lys-291 provides a ligand contact to 1D-myo-inositol hexakisphosphate. N-linked (GlcNAc...) asparagine glycans are attached at residues Asn-329 and Asn-343. The 1D-myo-inositol hexakisphosphate site is built by His-352 and Asp-353. Asn-367 is a glycosylation site (N-linked (GlcNAc...) asparagine).

Belongs to the histidine acid phosphatase family. In terms of assembly, monomer. In terms of processing, glycosylated.

Its subcellular location is the secreted. The catalysed reaction is 1D-myo-inositol hexakisphosphate + H2O = 1D-myo-inositol 1,2,4,5,6-pentakisphosphate + phosphate. The enzyme catalyses 1D-myo-inositol 1,2,4,5,6-pentakisphosphate + H2O = 1D-myo-inositol 1,2,5,6-tetrakisphosphate + phosphate. It carries out the reaction 1D-myo-inositol 1,2,5,6-tetrakisphosphate + H2O = 1D-myo-inositol 1,2,6-trisphosphate + phosphate. It catalyses the reaction 1D-myo-inositol 1,2,6-trisphosphate + H2O = 1D-myo-inositol 1,2-bisphosphate + phosphate. The catalysed reaction is 1D-myo-inositol 1,2-bisphosphate + H2O = 1D-myo-inositol 2-phosphate + phosphate. Its function is as follows. Catalyzes the phosphate monoester hydrolysis of phytic acid (myo-inositol hexakisphosphate), which results in the stepwise formation of myo-inositol pentakis-, tetrakis-, tris-, bis-, and monophosphates, as well as the liberation of inorganic phosphate. Myo-inositol 2-monophosphate is the end product. This is Phytase A from Penicillium oxalicum.